The chain runs to 1320 residues: Inner centromere protein A (1320 aa).

5 disordered regions span residues 53-75 (KNSN…NNIS), 426-447 (QEKQ…QPVV), 611-679 (NEPI…VVPP), 701-877 (EEEE…NTAS), and 896-1215 (TKSP…DGDE). 3 stretches are compositionally biased toward low complexity: residues 54-75 (NSNY…NNIS), 429-447 (QQQQ…QPVV), and 615-640 (QQPS…SSSS). Residues 221–444 (QQNQFQEQHK…KQQEKQQQQQ (224 aa)) adopt a coiled-coil conformation. Over residues 653-668 (TIVTSKPTNKVQPQSL) the composition is skewed to polar residues. The segment covering 669–679 (NSNINNNVVPP) has biased composition (low complexity). Positions 683 to 855 (AAIANKLKKQ…QKKKTVQTIL (173 aa)) form a coiled coil. Residues 701 to 835 (EEEERLRKKQ…QEKEKQEKQK (135 aa)) are compositionally biased toward basic and acidic residues. Polar residues predominate over residues 851–863 (VQTILPTPQTPSR). A compositionally biased stretch (low complexity) spans 864-877 (SANNNYDDAANTAS). 2 stretches are compositionally biased toward acidic residues: residues 908-926 (DDQD…ENSE) and 934-951 (QDDS…DSDE). Low complexity predominate over residues 965–977 (NKNKNSNNSNNNN). Residues 981 to 1000 (QSRKDKSIVFDSDSLNRNHN) show a composition bias toward basic and acidic residues. Composition is skewed to low complexity over residues 1026 to 1040 (SNMK…YSNS) and 1047 to 1061 (SPPS…SSES). The segment covering 1062 to 1071 (NDCFSPLTPT) has biased composition (polar residues). The segment covering 1072–1096 (NNNKINNNKINNNNSNNNSFNNSNS) has biased composition (low complexity). A compositionally biased stretch (polar residues) spans 1120–1136 (SKTSPFLTIRNTPSPLK). The segment covering 1143–1154 (NMSSASSLSSFD) has biased composition (low complexity). The segment covering 1155 to 1170 (SDNDSDYNDNDIDDGE) has biased composition (acidic residues). The segment covering 1175 to 1187 (PNENFTTPLKNQE) has biased composition (polar residues). The span at 1188-1198 (NNNNNNSNNSN) shows a compositional bias: low complexity. The segment covering 1199 to 1209 (TQYPIITSPPS) has biased composition (polar residues).

This sequence belongs to the INCENP family. Interacts with aurK.

It localises to the chromosome. Its subcellular location is the centromere. The protein resides in the cytoplasm. The protein localises to the cytoskeleton. It is found in the spindle. It localises to the nucleus. Its subcellular location is the cleavage furrow. Chromosomal passenger protein that seems to be required for chromosome segregation and the onset of cytokinesis during mitosis. Plays a key role in the abscission of daughter cells at the end of cytokinesis and in the establishment or maintenance of a bipolar spindle. In Dictyostelium discoideum (Social amoeba), this protein is Inner centromere protein A (icpA).